Here is an 858-residue protein sequence, read N- to C-terminus: Bifunctional uridylyltransferase/uridylyl-removing enzyme (858 aa).

Residues Met1–Leu324 form a uridylyltransferase region. The tract at residues Ser325 to Leu681 is uridylyl-removing. Residues Val443 to Leu565 enclose the HD domain. ACT domains lie at Gln682–Ser761 and Ile790–Val858.

Belongs to the GlnD family. The cofactor is Mg(2+).

The catalysed reaction is [protein-PII]-L-tyrosine + UTP = [protein-PII]-uridylyl-L-tyrosine + diphosphate. It carries out the reaction [protein-PII]-uridylyl-L-tyrosine + H2O = [protein-PII]-L-tyrosine + UMP + H(+). With respect to regulation, uridylyltransferase (UTase) activity is inhibited by glutamine, while glutamine activates uridylyl-removing (UR) activity. In terms of biological role, modifies, by uridylylation and deuridylylation, the PII regulatory proteins (GlnB and homologs), in response to the nitrogen status of the cell that GlnD senses through the glutamine level. Under low glutamine levels, catalyzes the conversion of the PII proteins and UTP to PII-UMP and PPi, while under higher glutamine levels, GlnD hydrolyzes PII-UMP to PII and UMP (deuridylylation). Thus, controls uridylylation state and activity of the PII proteins, and plays an important role in the regulation of nitrogen assimilation and metabolism. The protein is Bifunctional uridylyltransferase/uridylyl-removing enzyme of Burkholderia pseudomallei (strain 1106a).